We begin with the raw amino-acid sequence, 100 residues long: Putative antiporter subunit mnhF2 (100 aa).

The next 3 helical transmembrane spans lie at F5–L25, V38–N60, and L65–G87.

Belongs to the CPA3 antiporters (TC 2.A.63) subunit F family. May form a heterooligomeric complex that consists of seven subunits: mnhA2, mnhB2, mnhC2, mnhD2, mnhE2, mnhF2 and mnhG2.

Its subcellular location is the cell membrane. In Staphylococcus epidermidis (strain ATCC 35984 / DSM 28319 / BCRC 17069 / CCUG 31568 / BM 3577 / RP62A), this protein is Putative antiporter subunit mnhF2 (mnhF2).